A 346-amino-acid chain; its full sequence is NADH-ubiquinone oxidoreductase chain 2 (346 aa).

The next 11 membrane-spanning stretches (helical) occupy residues 1-21, 25-45, 60-80, 95-115, 124-144, 149-169, 178-195, 200-219, 242-262, 274-294, and 326-346; these read MNPHATPVLVLSLALGTTITI, HWVLAWTGLEINTLAIIPLIS, FLTQAAASALVLFSSMTNAWA, CLLLTAAIAIKLGLVPFHFWF, LMTALLLSTLMKFPPLTLLLM, LNPALLTTMALASAALGGWMG, ILAFSSISHLGWIAIILV, LALLTFYLYTIMTSAVFMAL, ATLMLVLLSLAGLPPLTGFMP, EMTPAAMAIAMLSLLSLFFYL, and AILASLSILLLPLSPMIHAIV.

This sequence belongs to the complex I subunit 2 family.

It is found in the mitochondrion inner membrane. The catalysed reaction is a ubiquinone + NADH + 5 H(+)(in) = a ubiquinol + NAD(+) + 4 H(+)(out). Its function is as follows. Core subunit of the mitochondrial membrane respiratory chain NADH dehydrogenase (Complex I) that is believed to belong to the minimal assembly required for catalysis. Complex I functions in the transfer of electrons from NADH to the respiratory chain. The immediate electron acceptor for the enzyme is believed to be ubiquinone. This Mareca americana (American wigeon) protein is NADH-ubiquinone oxidoreductase chain 2 (MT-ND2).